Here is a 332-residue protein sequence, read N- to C-terminus: MKFELDEKRRVVRIVPEREEDLYFIYLLIDRGDIVRGWTVREYKPEGAKEGERVKMYLGISVEKIEYHKFRSSLRVRGTVVEVQEEVEGVKGRRHTFEIVPGREVVVEKRRGSVEVVKRILDMANVALPRILLVSIDDEEAALAYISALGAEIMYTVPNQVNRGKRGESLLEDFFKSVNTLVEEVKRLRKIDRVVLAGPGMVVDQAGRYIRGERVVQSSGGVAGVYEFLRSGLYDKLKEELGLEAYSRLQKMLASQRDLVALGVEEVKEAVSIGRAETVLILDTYMKEKPDEAWEILSQVYNTGGKVYIVREDTEVGAAIRAMGNIVALLRW.

This sequence belongs to the eukaryotic release factor 1 family. Pelota subfamily. As to quaternary structure, monomer. A divalent metal cation serves as cofactor.

It localises to the cytoplasm. May function in recognizing stalled ribosomes, interact with stem-loop structures in stalled mRNA molecules, and effect endonucleolytic cleavage of the mRNA. May play a role in the release non-functional ribosomes and degradation of damaged mRNAs. Has endoribonuclease activity. This Pyrobaculum calidifontis (strain DSM 21063 / JCM 11548 / VA1) protein is Protein pelota homolog.